Here is a 272-residue protein sequence, read N- to C-terminus: D-aminoacyl-tRNA deacylase (272 aa).

It belongs to the DtdA deacylase family. As to quaternary structure, monomer. The cofactor is Zn(2+).

It carries out the reaction a D-aminoacyl-tRNA + H2O = a tRNA + a D-alpha-amino acid + H(+). The enzyme catalyses glycyl-tRNA(Ala) + H2O = tRNA(Ala) + glycine + H(+). Functionally, D-aminoacyl-tRNA deacylase with broad substrate specificity. By recycling D-aminoacyl-tRNA to D-amino acids and free tRNA molecules, this enzyme counteracts the toxicity associated with the formation of D-aminoacyl-tRNA entities in vivo. The protein is D-aminoacyl-tRNA deacylase of Desulfurococcus amylolyticus (strain DSM 18924 / JCM 16383 / VKM B-2413 / 1221n) (Desulfurococcus kamchatkensis).